A 1142-amino-acid polypeptide reads, in one-letter code: Protein kinase C-like (1142 aa).

An REM-1 1 domain is found at 1–67; sequence MNDEDKVHDI…LRELQMRRLG (67 aa). Residues 70–139 are disordered; that stretch reads VDNMSLGASP…PPDSNVPRAR (70 aa). In terms of domain architecture, REM-1 2 spans 149–226; it reads KFDTPHLGPR…LKRYEELHID (78 aa). Positions 231–349 constitute a C2 domain; sequence GPDDDSINLP…LRRKKIEAEM (119 aa). The disordered stretch occupies residues 357-403; sequence ADRVGSRAPPPQFPMGAQSPQFAAPPTSPGSQEQNTMIPPQAPPPSQ. Polar residues predominate over residues 385–394; the sequence is PGSQEQNTMI. Phorbol-ester/DAG-type zinc fingers lie at residues 457 to 505 and 525 to 576; these read GHKF…VTKC and PHRF…PDFC. Disordered regions lie at residues 592 to 622 and 651 to 807; these read TQKK…SGSI and SQTT…TDPG. A compositionally biased stretch (polar residues) spans 613 to 622; it reads SKTSISSGSI. Composition is skewed to low complexity over residues 663–677, 712–724, and 741–765; these read TSTS…AAAA, SAQQ…SPQQ, and PQAR…MYQQ. The 260-residue stretch at 817–1076 folds into the Protein kinase domain; the sequence is FNFLAVLGKG…AQEIMSQPFF (260 aa). ATP is bound by residues 823-831 and Lys846; that span reads LGKGNFGKV. Asp942 acts as the Proton acceptor in catalysis. An AGC-kinase C-terminal domain is found at 1077–1142; the sequence is RNINWDDIYH…RGFSYTADFE (66 aa).

The protein belongs to the protein kinase superfamily. AGC Ser/Thr protein kinase family. PKC subfamily.

It carries out the reaction L-seryl-[protein] + ATP = O-phospho-L-seryl-[protein] + ADP + H(+). It catalyses the reaction L-threonyl-[protein] + ATP = O-phospho-L-threonyl-[protein] + ADP + H(+). The polypeptide is Protein kinase C-like (Neurospora crassa (strain ATCC 24698 / 74-OR23-1A / CBS 708.71 / DSM 1257 / FGSC 987)).